The sequence spans 275 residues: Phosphite transport system permease protein PtxC (275 aa).

Transmembrane regions (helical) follow at residues 30 to 50 (LGQVAIVFGVVLLACWYVGLL), 88 to 108 (LAMSIAGTAIAVVFSLVVAFV), 136 to 156 (LIMGIIFVAAVGFGALPGVLA), 221 to 241 (ASTVMGMVGAGGIGFELMGSL), and 249 to 269 (VAAILLVILAMVTLVDAFSGV). The ABC transmembrane type-1 domain occupies 84–267 (LIDTLAMSIA…AMVTLVDAFS (184 aa)).

This sequence belongs to the binding-protein-dependent transport system permease family.

Its subcellular location is the cell inner membrane. In terms of biological role, probably forms part of a binding-protein-dependent phosphite transporter. Probably responsible for the translocation of the substrate across the membrane. The polypeptide is Phosphite transport system permease protein PtxC (ptxC) (Stutzerimonas stutzeri (Pseudomonas stutzeri)).